A 115-amino-acid polypeptide reads, in one-letter code: Large ribosomal subunit protein bL19 (115 aa).

It belongs to the bacterial ribosomal protein bL19 family.

Functionally, this protein is located at the 30S-50S ribosomal subunit interface and may play a role in the structure and function of the aminoacyl-tRNA binding site. The polypeptide is Large ribosomal subunit protein bL19 (Desulforapulum autotrophicum (strain ATCC 43914 / DSM 3382 / VKM B-1955 / HRM2) (Desulfobacterium autotrophicum)).